The sequence spans 633 residues: Probably inactive receptor-like protein kinase At2g46850 (633 aa).

The N-terminal stretch at 1-28 is a signal peptide; that stretch reads MPPLFLPSSSSALFLLLLLLLTLQTLTS. The Extracellular portion of the chain corresponds to 29-285; the sequence is ISLSQPQALR…IKKHNGKKLT (257 aa). 3 N-linked (GlcNAc...) asparagine glycosylation sites follow: Asn45, Asn69, and Asn231. The helical transmembrane segment at 286-306 threads the bilayer; the sequence is VLAGVLAPLFILGSLLALFCL. Residues 307-633 lie on the Cytoplasmic side of the membrane; that stretch reads LKRPVTSHKD…SPDSIYLPKT (327 aa). A Protein kinase domain is found at 355 to 633; the sequence is FQDSQKLTQG…SPDSIYLPKT (279 aa). ATP contacts are provided by residues 361 to 369 and Lys384; that span reads LTQGKTGTI.

Belongs to the protein kinase superfamily. Ser/Thr protein kinase family.

It localises to the membrane. In Arabidopsis thaliana (Mouse-ear cress), this protein is Probably inactive receptor-like protein kinase At2g46850.